The following is a 248-amino-acid chain: MILFPAIDLKGGQCVRLKLGDMQQATVYNTDPAAQAKSFEDQGFEWLHVVDLDGAFAGHSANGDAVEAILKATKNPVQLGGGIRTLDHIEAWLSRGLRRVILGTVAVRNPDLVIEACRKFPGHVAVGIDAKGGKVAVEGWAEASELGVIELARKFEGAGVAAIIYTDIDRDGILAGINWTSTLELAEAVSIPVIASGGLASLDDVRRMLEPDAQKLEGAISGRALYDGRIDPAEALALIKASRAKETA.

D8 serves as the catalytic Proton acceptor. D129 functions as the Proton donor in the catalytic mechanism.

The protein belongs to the HisA/HisF family.

The protein resides in the cytoplasm. It carries out the reaction 1-(5-phospho-beta-D-ribosyl)-5-[(5-phospho-beta-D-ribosylamino)methylideneamino]imidazole-4-carboxamide = 5-[(5-phospho-1-deoxy-D-ribulos-1-ylimino)methylamino]-1-(5-phospho-beta-D-ribosyl)imidazole-4-carboxamide. It participates in amino-acid biosynthesis; L-histidine biosynthesis; L-histidine from 5-phospho-alpha-D-ribose 1-diphosphate: step 4/9. In Rhizobium leguminosarum bv. trifolii (strain WSM2304), this protein is 1-(5-phosphoribosyl)-5-[(5-phosphoribosylamino)methylideneamino] imidazole-4-carboxamide isomerase.